Consider the following 449-residue polypeptide: Probable glycosyltransferase 5 (449 aa).

The span at 1–14 (MMEKHGGKVTSDRR) shows a compositional bias: basic and acidic residues. The disordered stretch occupies residues 1–24 (MMEKHGGKVTSDRRAGRRQHGQRC). At 1–28 (MMEKHGGKVTSDRRAGRRQHGQRCSASD) the chain is on the cytoplasmic side. The helical; Signal-anchor for type II membrane protein transmembrane segment at 29 to 49 (AAPLVVVVILIVGALFLILGP) threads the bilayer. The Lumenal portion of the chain corresponds to 50–449 (TGSSSFTVPR…HPTFRAARPT (400 aa)). Residues 74–109 (APPPPPPPAQMQAGANASSEEDSGLPPPRQLTDPPY) form a disordered region. N89, N413, and N422 each carry an N-linked (GlcNAc...) asparagine glycan.

This sequence belongs to the glycosyltransferase 34 family.

It localises to the golgi apparatus membrane. In terms of biological role, probable glycosyltransferase that may be involved in the biosynthesis of xyloglucan. The protein is Probable glycosyltransferase 5 of Oryza sativa subsp. indica (Rice).